The primary structure comprises 152 residues: Xanthine-guanine phosphoribosyltransferase (152 aa).

Residues 37–38, Arg-69, and 88–96 each bind 5-phospho-alpha-D-ribose 1-diphosphate; these read RG and DDLVDTGGT. GMP is bound at residue Arg-69. Asp-89 is a Mg(2+) binding site. Guanine contacts are provided by Asp-92 and Ile-135. The xanthine site is built by Asp-92 and Ile-135. GMP is bound by residues 92–96 and 134–135; these read DTGGT and WI.

This sequence belongs to the purine/pyrimidine phosphoribosyltransferase family. XGPT subfamily. In terms of assembly, homotetramer. Requires Mg(2+) as cofactor.

The protein resides in the cell inner membrane. It catalyses the reaction GMP + diphosphate = guanine + 5-phospho-alpha-D-ribose 1-diphosphate. The catalysed reaction is XMP + diphosphate = xanthine + 5-phospho-alpha-D-ribose 1-diphosphate. The enzyme catalyses IMP + diphosphate = hypoxanthine + 5-phospho-alpha-D-ribose 1-diphosphate. It functions in the pathway purine metabolism; GMP biosynthesis via salvage pathway; GMP from guanine: step 1/1. Its pathway is purine metabolism; XMP biosynthesis via salvage pathway; XMP from xanthine: step 1/1. Functionally, purine salvage pathway enzyme that catalyzes the transfer of the ribosyl-5-phosphate group from 5-phospho-alpha-D-ribose 1-diphosphate (PRPP) to the N9 position of the 6-oxopurines guanine and xanthine to form the corresponding ribonucleotides GMP (guanosine 5'-monophosphate) and XMP (xanthosine 5'-monophosphate), with the release of PPi. To a lesser extent, also acts on hypoxanthine. The protein is Xanthine-guanine phosphoribosyltransferase of Pectobacterium atrosepticum (strain SCRI 1043 / ATCC BAA-672) (Erwinia carotovora subsp. atroseptica).